Here is a 262-residue protein sequence, read N- to C-terminus: ATP synthase subunit a (262 aa).

The next 6 membrane-spanning stretches (helical) occupy residues 32 to 52 (IAFT…AVFV), 98 to 118 (LFMF…VLGI), 127 to 147 (FTIT…VGFW), 153 to 173 (FFSL…IFPI), 189 to 209 (LFVA…FVID), and 219 to 239 (LLVG…EILV).

It belongs to the ATPase A chain family. As to quaternary structure, F-type ATPases have 2 components, CF(1) - the catalytic core - and CF(0) - the membrane proton channel. CF(1) has five subunits: alpha(3), beta(3), gamma(1), delta(1), epsilon(1). CF(0) has four main subunits: a, b, b' and c.

The protein localises to the cell inner membrane. Key component of the proton channel; it plays a direct role in the translocation of protons across the membrane. The polypeptide is ATP synthase subunit a (Erythrobacter litoralis (strain HTCC2594)).